A 423-amino-acid chain; its full sequence is Serine--tRNA ligase (423 aa).

Thr-231 to Glu-233 serves as a coordination point for L-serine. Arg-262–Glu-264 is an ATP binding site. Glu-285 provides a ligand contact to L-serine. ATP is bound at residue Glu-349–Ser-352. Ser-385 is an L-serine binding site.

The protein belongs to the class-II aminoacyl-tRNA synthetase family. Type-1 seryl-tRNA synthetase subfamily. In terms of assembly, homodimer. The tRNA molecule binds across the dimer.

The protein resides in the cytoplasm. The enzyme catalyses tRNA(Ser) + L-serine + ATP = L-seryl-tRNA(Ser) + AMP + diphosphate + H(+). It carries out the reaction tRNA(Sec) + L-serine + ATP = L-seryl-tRNA(Sec) + AMP + diphosphate + H(+). Its pathway is aminoacyl-tRNA biosynthesis; selenocysteinyl-tRNA(Sec) biosynthesis; L-seryl-tRNA(Sec) from L-serine and tRNA(Sec): step 1/1. Functionally, catalyzes the attachment of serine to tRNA(Ser). Is also able to aminoacylate tRNA(Sec) with serine, to form the misacylated tRNA L-seryl-tRNA(Sec), which will be further converted into selenocysteinyl-tRNA(Sec). The chain is Serine--tRNA ligase from Acholeplasma laidlawii (strain PG-8A).